The following is an 816-amino-acid chain: tRNA(Met) cytidine acetyltransferase TmcA (816 aa).

Positions 265 and 439 each coordinate ATP. Residues 469–664 (ELIRKMEVYL…YTAIVIKPIS (196 aa)) form the N-acetyltransferase domain. Acetyl-CoA contacts are provided by residues 589–591 (IAT), glutamate 629, and arginine 636.

The protein belongs to the TmcA family.

The protein localises to the cytoplasm. The enzyme catalyses cytidine(34) in elongator tRNA(Met) + acetyl-CoA + ATP + H2O = N(4)-acetylcytidine(34) in elongator tRNA(Met) + ADP + phosphate + CoA + H(+). It catalyses the reaction a cytidine in RNA + acetyl-CoA + ATP + H2O = an N(4)-acetylcytidine in RNA + ADP + phosphate + CoA + H(+). The catalysed reaction is a cytidine in tRNA + acetyl-CoA + ATP + H2O = an N(4)-acetylcytidine in tRNA + ADP + phosphate + CoA + H(+). It carries out the reaction a cytidine in mRNA + acetyl-CoA + ATP + H2O = an N(4)-acetylcytidine in mRNA + ADP + phosphate + CoA + H(+). Catalyzes the formation of N(4)-acetylcytidine (ac(4)C) at the wobble position of tRNA(Met), by using acetyl-CoA as an acetyl donor and ATP (or GTP). Functionally, catalyzes the formation of 233 N(4)-acetylcytidine (ac(4)C) sites in RNA, on the middle C of a CCG motif. Modifications are found in rRNA, ncRNA, mRNA and tRNA. More acetylation is observed at 85 than at 65 or 75 degrees Celsius. In Pyrococcus furiosus (strain ATCC 43587 / DSM 3638 / JCM 8422 / Vc1), this protein is tRNA(Met) cytidine acetyltransferase TmcA.